The chain runs to 144 residues: INO80 complex subunit 5 (144 aa).

A disordered region spans residues 1–58 (MAAQKKQGERVLPARSTRKRRQLPDMLYYDERTDSYVTPQERSLSEANAQTRPAPNTI). Residues 35 to 58 (SYVTPQERSLSEANAQTRPAPNTI) show a composition bias toward polar residues.

Component of the INO80 chromatin remodeling complex.

The protein localises to the nucleus. Its function is as follows. Component of the INO80 complex which remodels chromatin by shifting nucleosomes and is involved in DNA repair. In Schizosaccharomyces pombe (strain 972 / ATCC 24843) (Fission yeast), this protein is INO80 complex subunit 5 (iec5).